Consider the following 185-residue polypeptide: Protein P21 (185 aa).

The protein is Protein P21 of Vitis vinifera (Grape).